The chain runs to 262 residues: MTFPYYASAEQIMRDRSELARKGIARGRSVVILTYADGVLFVAENPSNTLRKTSEIYDRIGFAAVGKYNEFESLRKAGIQLADMRGYSYDRADVSGLSLANTYANALGGVFTEQPKPFEVELCVAEVARYGKPKPSQLYRISYDGSITDETRFLVMGGATEPIAAALKESYQPDLELGAAVAVAVGALATPADSGNGTAASPRVLTAGDLEVAILDRNRPRRAFRRLSAAALEELLPTTGESDAGDSGADGSPSGDSPDTSA.

A disordered region spans residues 235 to 262 (LLPTTGESDAGDSGADGSPSGDSPDTSA).

It belongs to the peptidase T1A family. In terms of assembly, the 20S proteasome core is composed of 14 alpha and 14 beta subunits that assemble into four stacked heptameric rings, resulting in a barrel-shaped structure. The two inner rings, each composed of seven catalytic beta subunits, are sandwiched by two outer rings, each composed of seven alpha subunits. The catalytic chamber with the active sites is on the inside of the barrel. Has a gated structure, the ends of the cylinder being occluded by the N-termini of the alpha-subunits. Is capped by the proteasome-associated ATPase, ARC.

The protein localises to the cytoplasm. It participates in protein degradation; proteasomal Pup-dependent pathway. With respect to regulation, the formation of the proteasomal ATPase ARC-20S proteasome complex, likely via the docking of the C-termini of ARC into the intersubunit pockets in the alpha-rings, may trigger opening of the gate for substrate entry. Interconversion between the open-gate and close-gate conformations leads to a dynamic regulation of the 20S proteasome proteolysis activity. In terms of biological role, component of the proteasome core, a large protease complex with broad specificity involved in protein degradation. This Gordonia bronchialis (strain ATCC 25592 / DSM 43247 / BCRC 13721 / JCM 3198 / KCTC 3076 / NBRC 16047 / NCTC 10667) (Rhodococcus bronchialis) protein is Proteasome subunit alpha.